The following is a 157-amino-acid chain: MSLKVAFLNENARAPTRGSVHAAGYDLYAAEEKTIPANGRGLVDLGLSMSIPEGTYARIAPRSGLAVKNGLSTGAGVIDYDYRGPVKVMLFNHSTEDFNVTIGDRVAQMILERIVTPEVQVVQTNDLESTERGAGGFGSTGINDEKKRKLDEAEAKE.

Positions 63, 76, 79, 82, 87, 132, 137, and 138 each coordinate dUMP. The tract at residues 125-157 (NDLESTERGAGGFGSTGINDEKKRKLDEAEAKE) is disordered. Residues 143–157 (NDEKKRKLDEAEAKE) are compositionally biased toward basic and acidic residues.

Belongs to the dUTPase family. Homotrimer. Requires Mg(2+) as cofactor.

It catalyses the reaction dUTP + H2O = dUMP + diphosphate + H(+). The protein operates within pyrimidine metabolism; dUMP biosynthesis; dUMP from dCTP (dUTP route): step 2/2. Its function is as follows. Involved in nucleotide metabolism via production of dUMP, the immediate precursor of thymidine nucleotides, and decreases the intracellular concentration of dUTP so that uracil cannot be incorporated into DNA. The chain is Deoxyuridine 5'-triphosphate nucleotidohydrolase (DUT1) from Yarrowia lipolytica (strain CLIB 122 / E 150) (Yeast).